The sequence spans 187 residues: Pre-mRNA-splicing factor cwf7 (187 aa).

Belongs to the SPF27 family. In terms of assembly, belongs to the 40S cdc5-associated complex (or cwf complex), a spliceosome sub-complex reminiscent of a late-stage spliceosome composed of the U2, U5 and U6 snRNAs and at least brr2, cdc5, cwf2/prp3, cwf3/syf1, cwf4/syf3, cwf5/ecm2, spp42/cwf6, cwf7/spf27, cwf8, cwf9, cwf10, cwf11, cwf12, prp45/cwf13, cwf14, cwf15, cwf16, cwf17, cwf18, cwf19, cwf20, cwf21, cwf22, cwf23, cwf24, cwf25, cwf26, cyp7/cwf27, cwf28, cwf29/ist3, lea1, msl1, prp5/cwf1, prp10, prp12/sap130, prp17, prp22, sap61, sap62, sap114, sap145, slu7, smb1, smd1, smd3, smf1, smg1 and syf2.

Its subcellular location is the nucleus. Functionally, involved in mRNA splicing. The chain is Pre-mRNA-splicing factor cwf7 (cwf7) from Schizosaccharomyces pombe (strain 972 / ATCC 24843) (Fission yeast).